We begin with the raw amino-acid sequence, 3722 residues long: Vitelline envelope sperm lysin receptor (3722 aa).

Positions 1-24 (MSGMQWSFGFSCLFFLKTVWICQA) are cleaved as a signal peptide. Over 25–3698 (FDADTPDPRV…TPSTDMATVQ (3674 aa)) the chain is Extracellular. 2 disulfides stabilise this stretch: Cys43/Cys141 and Cys72/Cys104. One copy of the VERL 1 repeat lies at 77–155 (MQMTRGRGIN…SQASNAPEPK (79 aa)). Asn115, Asn122, and Asn142 each carry an N-linked (GlcNAc...) asparagine glycan. The segment at 146–169 (SQASNAPEPKASPTSSTPQPEAAS) is disordered. Residues 157-169 (SPTSSTPQPEAAS) are compositionally biased toward polar residues. Asn171 carries N-linked (GlcNAc...) asparagine glycosylation. 2 cysteine pairs are disulfide-bonded: Cys182/Cys280 and Cys211/Cys243. A VERL 2 repeat occupies 216–293 (VPITHEHGFN…KSPDAPKPES (78 aa)). Residue Asn254 is glycosylated (N-linked (GlcNAc...) asparagine). The tract at residues 279–335 (QCYMPKSPDAPKPESCLSSPPEPEASPSSNAPEPETYPTSSAPEKVSSDQPAPSHNQ) is disordered. Residues 291 to 312 (PESCLSSPPEPEASPSSNAPEP) show a composition bias toward low complexity. Residues 315 to 335 (YPTSSAPEKVSSDQPAPSHNQ) are compositionally biased toward polar residues. Asn334 and Asn373 each carry an N-linked (GlcNAc...) asparagine glycan. 2 cysteine pairs are disulfide-bonded: Cys345–Cys443 and Cys374–Cys406. The stretch at 379–455 (VPITQEFGIN…PKSPVAPKPE (77 aa)) is one VERL 3 repeat. N-linked (GlcNAc...) asparagine glycans are attached at residues Asn417, Asn438, Asn487, Asn501, Asn526, Asn570, Asn591, Asn640, Asn654, Asn679, Asn723, Asn744, Asn793, Asn807, Asn832, Asn876, Asn897, Asn946, Asn960, Asn985, Asn1029, Asn1050, Asn1099, Asn1113, Asn1138, Asn1182, Asn1203, Asn1252, Asn1266, Asn1291, Asn1335, Asn1356, Asn1405, Asn1419, Asn1443, and Asn1487. Residues 443 to 488 (CYMPKSPVAPKPETGPTSNAPEPETYPTSSAPEKVSSDQPAPSHNQ) form a disordered region. Polar residues predominate over residues 457 to 488 (GPTSNAPEPETYPTSSAPEKVSSDQPAPSHNQ). One copy of the VERL 4 repeat lies at 532–608 (VPITQEFGIN…PKSPVAPKPE (77 aa)). Positions 603-641 (VAPKPETGPTSNAPEPETYPTSSAPEKVSSDQPAPSHNQ) are disordered. Residues 610-641 (GPTSNAPEPETYPTSSAPEKVSSDQPAPSHNQ) show a composition bias toward polar residues. One copy of the VERL 5 repeat lies at 685–761 (VPITQEFGIN…PKSPVAPKPE (77 aa)). The segment at 756–794 (VAPKPETGPSSNAPEPETYPTSSAPEKVSSDQPAPSHNQ) is disordered. Residues 763–794 (GPSSNAPEPETYPTSSAPEKVSSDQPAPSHNQ) show a composition bias toward polar residues. The VERL 6 repeat unit spans residues 838–914 (VPITQEFGIN…PKSPVAPKPE (77 aa)). The segment at 909-947 (VAPKPETGPTSNAPEPETYPTSSAPEKVSSDQPAPSHNQ) is disordered. Residues 916–947 (GPTSNAPEPETYPTSSAPEKVSSDQPAPSHNQ) are compositionally biased toward polar residues. One copy of the VERL 7 repeat lies at 991-1067 (VPITHEFGIN…PKSPVAPKPE (77 aa)). Residues 1062–1100 (VAPKPETGPTSNAPEPETYPTSSAPEKVSSDQPAPSHNQ) are disordered. Polar residues predominate over residues 1069–1100 (GPTSNAPEPETYPTSSAPEKVSSDQPAPSHNQ). The VERL 8 repeat unit spans residues 1144 to 1220 (VPITQEFGIN…PKSPVAPKPE (77 aa)). The disordered stretch occupies residues 1215–1253 (VAPKPETGPTSNAPEPETYPTSSAPEKVSSDQPAPSHNQ). Residues 1222–1253 (GPTSNAPEPETYPTSSAPEKVSSDQPAPSHNQ) show a composition bias toward polar residues. One copy of the VERL 9 repeat lies at 1297–1373 (VPITHKFGIN…PKSPVAHKPE (77 aa)). The tract at residues 1368–1406 (VAHKPETGPTSNAPEPETYPTSSAPEKVSSDQPAPSHNQ) is disordered. Over residues 1375–1406 (GPTSNAPEPETYPTSSAPEKVSSDQPAPSHNQ) the composition is skewed to polar residues. Residues 1449–1525 (VPITHEFGIN…PKSPVAPKPE (77 aa)) form a VERL 10 repeat. Residues 1519–1556 (PVAPKPETGPSSNAPEPETYPTSSAPEKVYSDQPAPSH) are disordered. Positions 1527–1543 (GPSSNAPEPETYPTSSA) are enriched in polar residues. N-linked (GlcNAc...) asparagine glycosylation is found at Asn1557, Asn1571, Asn1596, Asn1640, Asn1661, Asn1710, Asn1724, Asn1749, Asn1793, Asn1814, Asn1863, Asn1877, Asn1902, Asn1946, Asn1967, Asn2016, Asn2030, Asn2055, Asn2099, Asn2120, Asn2169, Asn2183, Asn2208, Asn2252, Asn2273, Asn2322, Asn2336, Asn2361, Asn2405, Asn2426, Asn2475, Asn2489, Asn2514, Asn2558, Asn2579, Asn2628, Asn2642, Asn2667, Asn2711, Asn2732, Asn2781, Asn2795, Asn2820, Asn2864, Asn2885, Asn2934, Asn2948, Asn2973, Asn3017, Asn3038, Asn3087, Asn3101, Asn3126, Asn3170, Asn3191, Asn3229, Asn3243, Asn3268, Asn3312, and Asn3333. The VERL 11 repeat unit spans residues 1602 to 1678 (VPITHEFGIN…PKSPVAPKPE (77 aa)). The segment at 1672–1711 (PVAPKPETGPTSNAPEPQTYPTSSAPEKVSSDQPAPSHNQ) is disordered. Positions 1680 to 1711 (GPTSNAPEPQTYPTSSAPEKVSSDQPAPSHNQ) are enriched in polar residues. The VERL 12 repeat unit spans residues 1755-1831 (VPITQEFGIN…PKSPVAPKPE (77 aa)). The segment at 1826–1864 (VAPKPETGPTSNAPEPETYPTSSAPEKVSSDQPAPSHNQ) is disordered. A compositionally biased stretch (polar residues) spans 1833 to 1864 (GPTSNAPEPETYPTSSAPEKVSSDQPAPSHNQ). The VERL 13 repeat unit spans residues 1908 to 1984 (VPITHEFGIN…PKSPVAPKPE (77 aa)). The interval 1979–2017 (VAPKPETGPTSNAPEPETYPTSSAPEKVSSDQPAPSHNQ) is disordered. Over residues 1986-2017 (GPTSNAPEPETYPTSSAPEKVSSDQPAPSHNQ) the composition is skewed to polar residues. A VERL 14 repeat occupies 2061–2137 (VPITQEFGIN…PKSPVAPKPE (77 aa)). Residues 2132-2170 (VAPKPETGPTSNAPEPETYPTSSAPEKVSSDQPAPSHNQ) are disordered. Polar residues predominate over residues 2139 to 2170 (GPTSNAPEPETYPTSSAPEKVSSDQPAPSHNQ). A VERL 15 repeat occupies 2214–2290 (VPITQEFGIN…PKSPVAPKPE (77 aa)). A disordered region spans residues 2285 to 2323 (VAPKPETGPTSNAPEPETYPTSSAPEKVSSDQPAPSHNQ). The span at 2292–2323 (GPTSNAPEPETYPTSSAPEKVSSDQPAPSHNQ) shows a compositional bias: polar residues. Residues 2367-2443 (VPITQEFGIN…PKSPVAPKPE (77 aa)) form a VERL 16 repeat. The tract at residues 2438–2476 (VAPKPETGPTSNAPEPETYPTSSAPEKVSSDQPAPSHNQ) is disordered. A compositionally biased stretch (polar residues) spans 2445–2476 (GPTSNAPEPETYPTSSAPEKVSSDQPAPSHNQ). Residues 2520–2596 (VPITQEFGIN…PKSPVAPKPE (77 aa)) form a VERL 17 repeat. The tract at residues 2590-2629 (PVAPKPETGPTSNAPEPQTYPTSSAPEKVSSDQPAPSHNQ) is disordered. Residues 2598 to 2629 (GPTSNAPEPQTYPTSSAPEKVSSDQPAPSHNQ) are compositionally biased toward polar residues. One copy of the VERL 18 repeat lies at 2673 to 2749 (VPITQEFGIN…PKSPVAPKPE (77 aa)). Residues 2744–2782 (VAPKPETGPTSNAPEPETYPTSSAPEKVSSDQPAPSHNQ) are disordered. Polar residues predominate over residues 2751 to 2782 (GPTSNAPEPETYPTSSAPEKVSSDQPAPSHNQ). The stretch at 2826–2902 (VPITHEFGIN…PKSPVAPKPE (77 aa)) is one VERL 19 repeat. The disordered stretch occupies residues 2897 to 2935 (VAPKPETGPTSNAPEPQTYPTSSAPEKVSSDQPAPSHNQ). A compositionally biased stretch (polar residues) spans 2904 to 2935 (GPTSNAPEPQTYPTSSAPEKVSSDQPAPSHNQ). The stretch at 2979–3055 (VPITQEFGIN…PKSPVAPKPE (77 aa)) is one VERL 20 repeat. The tract at residues 3050 to 3088 (VAPKPETGPTSNAPEPETYPTSSAPEKVSSDQPAPSHNQ) is disordered. Residues 3057 to 3088 (GPTSNAPEPETYPTSSAPEKVSSDQPAPSHNQ) are compositionally biased toward polar residues. A VERL 21 repeat occupies 3132–3208 (VPITQEFGIN…PKSPVAPKPE (77 aa)). The segment at 3205–3230 (PKPETYPTSSAPEKVSSDQPAPSHNQ) is disordered. Positions 3210–3230 (YPTSSAPEKVSSDQPAPSHNQ) are enriched in polar residues. Residues 3274-3351 (VPITHEFGIN…KSPVAPKPEA (78 aa)) form a VERL 22 repeat. Residues 3345 to 3407 (VAPKPEASPT…RKSNQTTSTE (63 aa)) are disordered. Residues 3352–3375 (SPTSNAPEPQTYPTSSAPGTSPEG) show a composition bias toward polar residues. 6 N-linked (GlcNAc...) asparagine glycosylation sites follow: Asn3388, Asn3401, Asn3449, Asn3456, Asn3559, and Asn3650. In terms of domain architecture, ZP spans 3408 to 3670 (DVLDDTSNYI…SSCSNQRRTR (263 aa)). Residues 3699 to 3719 (VALLVAVALLITQLAGLAIYV) form a helical membrane-spanning segment. The Cytoplasmic portion of the chain corresponds to 3720–3722 (NIN).

As to quaternary structure, may form disulfide-linked homodimers. Interacts (via VERL repeats) with sperm lysin. Each VERL chain can bind numerous lysin molecules. In terms of processing, N-glycosylated. About half of the glycoprotein mass corresponds to carbohydrate chains. N-glycosylation is not required for lysin binding. O-glycosylated. O-glycosylation is not required for lysin binding.

The protein localises to the cell membrane. It localises to the secreted. The protein resides in the extracellular space. Its subcellular location is the extracellular matrix. Structural component of the egg vitelline envelope; forms long filaments. Functions as a species-specific receptor for the sperm protein lysin; prevents fertilization by sperm from other species. Each VERL chain can bind multiple copies of the sperm protein lysin; this creates a 3 um hole in the egg vitelline envelope through which the sperm passes. This chain is Vitelline envelope sperm lysin receptor, found in Haliotis rufescens (California red abalone).